The sequence spans 238 residues: Sugar fermentation stimulation protein homolog (238 aa).

This sequence belongs to the SfsA family.

The protein is Sugar fermentation stimulation protein homolog of Alteromonas mediterranea (strain DSM 17117 / CIP 110805 / LMG 28347 / Deep ecotype).